Here is a 110-residue protein sequence, read N- to C-terminus: UPF0122 protein lin1916 (110 aa).

The protein belongs to the UPF0122 family.

Functionally, might take part in the signal recognition particle (SRP) pathway. This is inferred from the conservation of its genetic proximity to ftsY/ffh. May be a regulatory protein. The sequence is that of UPF0122 protein lin1916 from Listeria innocua serovar 6a (strain ATCC BAA-680 / CLIP 11262).